Reading from the N-terminus, the 350-residue chain is Dihydroorotase (350 aa).

H13 and H15 together coordinate Zn(2+). Residues 15–17 and N41 contribute to the substrate site; that span reads HLR. Zn(2+) contacts are provided by K99, H136, and H174. At K99 the chain carries N6-carboxylysine. Substrate is bound at residue H136. L219 is a substrate binding site. D247 provides a ligand contact to Zn(2+). The active site involves D247. Substrate is bound by residues H251 and A263.

Belongs to the metallo-dependent hydrolases superfamily. DHOase family. Class II DHOase subfamily. In terms of assembly, homodimer. It depends on Zn(2+) as a cofactor.

It carries out the reaction (S)-dihydroorotate + H2O = N-carbamoyl-L-aspartate + H(+). It functions in the pathway pyrimidine metabolism; UMP biosynthesis via de novo pathway; (S)-dihydroorotate from bicarbonate: step 3/3. Catalyzes the reversible cyclization of carbamoyl aspartate to dihydroorotate. In Allorhizobium ampelinum (strain ATCC BAA-846 / DSM 112012 / S4) (Agrobacterium vitis (strain S4)), this protein is Dihydroorotase.